The sequence spans 180 residues: Ribulose bisphosphate carboxylase small subunit, chloroplastic 4 (180 aa).

Residues 1 to 56 (MASSIVSSAAVATRGNGAQASMVAPFTGLKSTASFPVSRKQNLDITSIASNGGRVS) constitute a chloroplast transit peptide.

This sequence belongs to the RuBisCO small chain family. As to quaternary structure, heterohexadecamer of 8 large and 8 small subunits. (Microbial infection) Binds to tobamovirus movement protein; this interaction seems required for viral systemic movement.

It is found in the plastid. The protein resides in the chloroplast. The protein localises to the cell junction. It localises to the plasmodesma. RuBisCO catalyzes two reactions: the carboxylation of D-ribulose 1,5-bisphosphate, the primary event in carbon dioxide fixation, as well as the oxidative fragmentation of the pentose substrate. Both reactions occur simultaneously and in competition at the same active site. Although the small subunit is not catalytic it is essential for maximal activity. Involved in antiviral defenses. The sequence is that of Ribulose bisphosphate carboxylase small subunit, chloroplastic 4 from Solanum lycopersicum (Tomato).